The chain runs to 226 residues: Transmembrane protein 204 (226 aa).

Residues Met1–Lys5 lie on the Cytoplasmic side of the membrane. Residues Leu6–Phe26 form a helical membrane-spanning segment. The Extracellular portion of the chain corresponds to Thr27 to Asn103. Residues Leu104–Leu124 traverse the membrane as a helical segment. The Cytoplasmic segment spans residues Pro125 to Glu136. A helical membrane pass occupies residues Ala137 to Tyr157. The Extracellular segment spans residues Arg158–Tyr170. N-linked (GlcNAc...) asparagine glycosylation occurs at Asn164. The helical transmembrane segment at Leu171 to Leu191 threads the bilayer. Residues His192–Cys226 lie on the Cytoplasmic side of the membrane.

It is found in the cell junction. The protein localises to the adherens junction. The protein resides in the cell membrane. Its function is as follows. Can influence paracellular permeability. Appears to be involved in cell-cell interactions through adherens. This Rattus norvegicus (Rat) protein is Transmembrane protein 204 (Tmem204).